Consider the following 273-residue polypeptide: Nitrogenase iron protein (273 aa).

An ATP-binding site is contributed by 8 to 15 (GKGGIGKS). C94 contributes to the [4Fe-4S] cluster binding site. Position 97 is an ADP-ribosylarginine; by dinitrogenase reductase ADP-ribosyltransferase (R97). A [4Fe-4S] cluster-binding site is contributed by C130.

Belongs to the NifH/BchL/ChlL family. Homodimer. [4Fe-4S] cluster serves as cofactor. Post-translationally, the reversible ADP-ribosylation of Arg-97 inactivates the nitrogenase reductase and regulates nitrogenase activity.

The enzyme catalyses N2 + 8 reduced [2Fe-2S]-[ferredoxin] + 16 ATP + 16 H2O = H2 + 8 oxidized [2Fe-2S]-[ferredoxin] + 2 NH4(+) + 16 ADP + 16 phosphate + 6 H(+). Functionally, the key enzymatic reactions in nitrogen fixation are catalyzed by the nitrogenase complex, which has 2 components: the iron protein and the molybdenum-iron protein. The sequence is that of Nitrogenase iron protein from Desulforapulum autotrophicum (strain ATCC 43914 / DSM 3382 / VKM B-1955 / HRM2) (Desulfobacterium autotrophicum).